Reading from the N-terminus, the 62-residue chain is Photosystem II reaction center protein Z (62 aa).

Transmembrane regions (helical) follow at residues 8–28 (LVLL…VVLA) and 41–61 (YTGA…NSLV).

It belongs to the PsbZ family. In terms of assembly, PSII is composed of 1 copy each of membrane proteins PsbA, PsbB, PsbC, PsbD, PsbE, PsbF, PsbH, PsbI, PsbJ, PsbK, PsbL, PsbM, PsbT, PsbX, PsbY, PsbZ, Psb30/Ycf12, at least 3 peripheral proteins of the oxygen-evolving complex and a large number of cofactors. It forms dimeric complexes.

The protein resides in the plastid. It localises to the chloroplast thylakoid membrane. May control the interaction of photosystem II (PSII) cores with the light-harvesting antenna, regulates electron flow through the 2 photosystem reaction centers. PSII is a light-driven water plastoquinone oxidoreductase, using light energy to abstract electrons from H(2)O, generating a proton gradient subsequently used for ATP formation. This is Photosystem II reaction center protein Z from Porphyra purpurea (Red seaweed).